The sequence spans 208 residues: FMN-dependent NADH:quinone oxidoreductase 2 (208 aa).

Serine 17 to serine 19 lines the FMN pocket.

It belongs to the azoreductase type 1 family. As to quaternary structure, homodimer. FMN is required as a cofactor.

It carries out the reaction 2 a quinone + NADH + H(+) = 2 a 1,4-benzosemiquinone + NAD(+). The catalysed reaction is N,N-dimethyl-1,4-phenylenediamine + anthranilate + 2 NAD(+) = 2-(4-dimethylaminophenyl)diazenylbenzoate + 2 NADH + 2 H(+). In terms of biological role, quinone reductase that provides resistance to thiol-specific stress caused by electrophilic quinones. Functionally, also exhibits azoreductase activity. Catalyzes the reductive cleavage of the azo bond in aromatic azo compounds to the corresponding amines. This chain is FMN-dependent NADH:quinone oxidoreductase 2, found in Halalkalibacterium halodurans (strain ATCC BAA-125 / DSM 18197 / FERM 7344 / JCM 9153 / C-125) (Bacillus halodurans).